The chain runs to 243 residues: 1-(5-phosphoribosyl)-5-[(5-phosphoribosylamino)methylideneamino] imidazole-4-carboxamide isomerase (243 aa).

Catalysis depends on aspartate 8, which acts as the Proton acceptor. The Proton donor role is filled by aspartate 129.

This sequence belongs to the HisA/HisF family.

The protein localises to the cytoplasm. The enzyme catalyses 1-(5-phospho-beta-D-ribosyl)-5-[(5-phospho-beta-D-ribosylamino)methylideneamino]imidazole-4-carboxamide = 5-[(5-phospho-1-deoxy-D-ribulos-1-ylimino)methylamino]-1-(5-phospho-beta-D-ribosyl)imidazole-4-carboxamide. It functions in the pathway amino-acid biosynthesis; L-histidine biosynthesis; L-histidine from 5-phospho-alpha-D-ribose 1-diphosphate: step 4/9. This Carboxydothermus hydrogenoformans (strain ATCC BAA-161 / DSM 6008 / Z-2901) protein is 1-(5-phosphoribosyl)-5-[(5-phosphoribosylamino)methylideneamino] imidazole-4-carboxamide isomerase.